The primary structure comprises 383 residues: Galactokinase (383 aa).

34–37 (EHTD) is a substrate binding site. 124 to 130 (GAGLSSS) is a binding site for ATP. Residues Ser-130 and Glu-162 each contribute to the Mg(2+) site. Asp-174 serves as the catalytic Proton acceptor. Position 223 (Tyr-223) interacts with substrate.

This sequence belongs to the GHMP kinase family. GalK subfamily.

The protein localises to the cytoplasm. It catalyses the reaction alpha-D-galactose + ATP = alpha-D-galactose 1-phosphate + ADP + H(+). It participates in carbohydrate metabolism; galactose metabolism. In terms of biological role, catalyzes the transfer of the gamma-phosphate of ATP to D-galactose to form alpha-D-galactose-1-phosphate (Gal-1-P). This Yersinia enterocolitica serotype O:8 / biotype 1B (strain NCTC 13174 / 8081) protein is Galactokinase.